The following is a 110-amino-acid chain: Small ribosomal subunit protein bS16 (110 aa).

The span at 81-104 shows a compositional bias: basic and acidic residues; sequence VRPAEVLGKQKQEKERSAKKKDAT. The disordered stretch occupies residues 81–110; that stretch reads VRPAEVLGKQKQEKERSAKKKDATASETSE.

The protein belongs to the bacterial ribosomal protein bS16 family.

In Prochlorococcus marinus (strain NATL1A), this protein is Small ribosomal subunit protein bS16.